The primary structure comprises 134 residues: Probable histone H2A.3 (134 aa).

The protein belongs to the histone H2A family. The nucleosome is a histone octamer containing two molecules each of H2A, H2B, H3 and H4 assembled in one H3-H4 heterotetramer and two H2A-H2B heterodimers. The octamer wraps approximately 147 bp of DNA.

The protein localises to the nucleus. It is found in the chromosome. In terms of biological role, core component of nucleosome. Nucleosomes wrap and compact DNA into chromatin, limiting DNA accessibility to the cellular machineries which require DNA as a template. Histones thereby play a central role in transcription regulation, DNA repair, DNA replication and chromosomal stability. DNA accessibility is regulated via a complex set of post-translational modifications of histones, also called histone code, and nucleosome remodeling. The chain is Probable histone H2A.3 from Oryza sativa subsp. indica (Rice).